The sequence spans 492 residues: Differentially expressed in FDCP 8 homolog (492 aa).

Over residues 38–51 (GLGGSGSTGSGSEA) the composition is skewed to gly residues. Residues 38 to 62 (GLGGSGSTGSGSEAGGSEESGPQGA) are disordered. Phorbol-ester/DAG-type zinc fingers lie at residues 161–214 (PHHG…KRVC) and 400–453 (DHIR…NMIC). Residues 468–492 (RMKSTEDDDDDDDGVATDDDVTAAE) form a disordered region. Residues 473 to 492 (EDDDDDDDGVATDDDVTAAE) are compositionally biased toward acidic residues.

It belongs to the DEF8 family.

The protein is Differentially expressed in FDCP 8 homolog of Drosophila melanogaster (Fruit fly).